Reading from the N-terminus, the 652-residue chain is MNKRMNELVALLNRYATEYYTSDNPSVSDSEYDRLYRELVELETAYPEQVLADSPTHRVGGKVLDGFEKYSHQYPLYSLQDAFSREELDAFDARVRKEVAHPTYICELKIDGLSISLTYEKGILVAGVTRGDGSIGENITENLKRVKDIPLTLPEELDITVRGECYMPRASFDQVNQVRQENGEPEFANPRNAAAGTLRQLDTAVVAKRNLATFLYQEASPSTRDSQEKGLKYLEQLGFVVNPKRILAENIDEIWNFIQEVGQERENLPYDIDGVVIKVNDLASQEELGFTVKAPKWAVAYKFPAEEKEAQLLSVDWTVGRTGVVTPTANLTPVQLAGTTVSRATLHNVDYIAEKDIRKDDTVIVYKAGDIIPAVLRVVESKRVSEEKLDIPTNCPSCNSDLLHFEDEVALRCINPRCPAQIMEGLIHFASRDAMNITGLGPSIVEKLFAANLVKDVADIYRLQEEDFLLLEGVKEKSAAKLYQAIQASKENSAEKLLFGLGIRHVGSKVSQLLLQYFHSIENLSQADSEEVASIESLGGVIAKSLQTYFATEGSEILLRELKETGVNLDYKGQTVVADAALSGLTVVLTGKLERLKRSEAKSKLESLGAKVTGSISKKTDLVVVGADAGSKLQKAQELGIQVRDEAWLESL.

NAD(+) contacts are provided by residues 29-33, 78-79, and Glu-107; these read DSEYD and SL. Residue Lys-109 is the N6-AMP-lysine intermediate of the active site. Arg-130, Glu-164, Lys-278, and Lys-302 together coordinate NAD(+). 4 residues coordinate Zn(2+): Cys-395, Cys-398, Cys-413, and Cys-418. Residues 577–652 enclose the BRCT domain; it reads VADAALSGLT…VRDEAWLESL (76 aa).

This sequence belongs to the NAD-dependent DNA ligase family. LigA subfamily. Requires Mg(2+) as cofactor. The cofactor is Mn(2+).

The catalysed reaction is NAD(+) + (deoxyribonucleotide)n-3'-hydroxyl + 5'-phospho-(deoxyribonucleotide)m = (deoxyribonucleotide)n+m + AMP + beta-nicotinamide D-nucleotide.. DNA ligase that catalyzes the formation of phosphodiester linkages between 5'-phosphoryl and 3'-hydroxyl groups in double-stranded DNA using NAD as a coenzyme and as the energy source for the reaction. It is essential for DNA replication and repair of damaged DNA. In Streptococcus pneumoniae (strain CGSP14), this protein is DNA ligase.